The chain runs to 648 residues: Macrolide export ATP-binding/permease protein MacB (648 aa).

Residues 5 to 243 (LELKDIRRSY…TGGTEPVVNT (239 aa)) form the ABC transporter domain. 41 to 48 (GASGSGKS) is a binding site for ATP. 4 helical membrane passes run 273-293 (LLTM…VVVG), 523-543 (LFLT…VMNI), 576-596 (AVLV…LIAF), and 611-631 (PLAL…FGWL).

This sequence belongs to the ABC transporter superfamily. Macrolide exporter (TC 3.A.1.122) family. Homodimer. Part of the tripartite efflux system MacAB-TolC, which is composed of an inner membrane transporter, MacB, a periplasmic membrane fusion protein, MacA, and an outer membrane component, TolC. The complex forms a large protein conduit and can translocate molecules across both the inner and outer membranes. Interacts with MacA.

The protein localises to the cell inner membrane. Part of the tripartite efflux system MacAB-TolC. MacB is a non-canonical ABC transporter that contains transmembrane domains (TMD), which form a pore in the inner membrane, and an ATP-binding domain (NBD), which is responsible for energy generation. Confers resistance against macrolides. In Escherichia coli (strain UTI89 / UPEC), this protein is Macrolide export ATP-binding/permease protein MacB.